The sequence spans 326 residues: MLTFARQQQRRNVRWLLSLSLLVLLATLLSLCAGEQWIAPGDWLSARGELFVWQIRLPRTLAVLLVGAALALSGAVMQALFENPLTEPGLLGVSNGAGVGLIAAVLLGQGQLPGWALGLCAIAGALIITLILLRFARRHLSTSRLLLAGVALGIICSALMTWAIYFSTSFDLRQLMYWMMGGFGGVDWQQSWLMIALIPVLIWICCQSQPLNMLALGETSARQLGLPLWFWRNLLVIATGWMVGVSVAMAGAIGFIGLVIPHILRLCGLTDHRVLLPGCALAGAIALLLADVVARLALASAELPIGVVTATLGAPVFIWLLLKSAR.

Transmembrane regions (helical) follow at residues 15-35 (WLLS…CAGE), 61-81 (LAVL…QALF), 88-108 (PGLL…VLLG), 112-132 (LPGW…TLIL), 146-166 (LLAG…AIYF), 184-204 (GGVD…LIWI), 240-260 (GWMV…GLVI), 274-294 (VLLP…DVVA), and 302-322 (ELPI…WLLL).

The protein belongs to the binding-protein-dependent transport system permease family. FecCD subfamily. The complex is composed of two ATP-binding proteins (BtuD), two transmembrane proteins (BtuC) and a solute-binding protein (BtuF).

The protein localises to the cell inner membrane. In terms of biological role, part of the ABC transporter complex BtuCDF involved in vitamin B12 import. Involved in the translocation of the substrate across the membrane. The protein is Vitamin B12 import system permease protein BtuC of Salmonella choleraesuis (strain SC-B67).